A 131-amino-acid polypeptide reads, in one-letter code: Glycine cleavage system H protein (131 aa).

Residues 24 to 106 form the Lipoyl-binding domain; it reads IATIGISAFA…YGEGWLLKLR (83 aa). Position 65 is an N6-lipoyllysine (Lys-65).

Belongs to the GcvH family. In terms of assembly, the glycine cleavage system is composed of four proteins: P, T, L and H. (R)-lipoate serves as cofactor.

In terms of biological role, the glycine cleavage system catalyzes the degradation of glycine. The H protein shuttles the methylamine group of glycine from the P protein to the T protein. The sequence is that of Glycine cleavage system H protein from Gloeothece citriformis (strain PCC 7424) (Cyanothece sp. (strain PCC 7424)).